The chain runs to 391 residues: Aspartic protease 17 (391 aa).

The N-terminal stretch at 1-15 is a signal peptide; sequence MHLIFLLFLAPFCSA. A Peptidase A1 domain is found at 65-385; the sequence is YLGNFTVGTP…DIGNARIGFA (321 aa). A glycan (N-linked (GlcNAc...) asparagine) is linked at N68. D83 is a catalytic residue. The N-linked (GlcNAc...) asparagine glycan is linked to N108. D274 is an active-site residue. C309 and C345 are oxidised to a cystine.

Belongs to the peptidase A1 family. As to expression, expressed in intestinal cells.

It localises to the secreted. Functionally, aspartic proteinase. The protein is Aspartic protease 17 of Caenorhabditis elegans.